The chain runs to 780 residues: LPS-assembly protein LptD (780 aa).

An N-terminal signal peptide occupies residues 1-24 (MKKRFPTLLATLIWTALYSQHTLA).

Belongs to the LptD family. Component of the lipopolysaccharide transport and assembly complex. Interacts with LptE and LptA.

It localises to the cell outer membrane. Together with LptE, is involved in the assembly of lipopolysaccharide (LPS) at the surface of the outer membrane. This is LPS-assembly protein LptD from Yersinia pestis bv. Antiqua (strain Antiqua).